The following is a 66-amino-acid chain: Large ribosomal subunit protein bL35 (66 aa).

Basic residues predominate over residues 1–16 (MPKQKTHRASAKRFKR). Residues 1 to 21 (MPKQKTHRASAKRFKRTGNGG) are disordered.

It belongs to the bacterial ribosomal protein bL35 family.

The polypeptide is Large ribosomal subunit protein bL35 (Lactococcus lactis subsp. cremoris (strain MG1363)).